A 523-amino-acid polypeptide reads, in one-letter code: tRNA-2-methylthio-N(6)-dimethylallyladenosine synthase (523 aa).

Residues 1-26 (MNEKQRLEQTGQIQTASHPADRKSDL) form a disordered region. Positions 8-17 (EQTGQIQTAS) are enriched in polar residues. Residues 80-198 (RKFYIRTYGC…LPYILHEAYM (119 aa)) enclose the MTTase N-terminal domain. Residues C89, C125, C159, C235, C239, and C242 each contribute to the [4Fe-4S] cluster site. The Radical SAM core domain maps to 221-451 (RKGNIKAWVN…NALVQEIAAK (231 aa)). In terms of domain architecture, TRAM spans 454–517 (KQYEGQVVEV…TWTLTGELAN (64 aa)).

This sequence belongs to the methylthiotransferase family. MiaB subfamily. Monomer. It depends on [4Fe-4S] cluster as a cofactor.

The protein resides in the cytoplasm. The catalysed reaction is N(6)-dimethylallyladenosine(37) in tRNA + (sulfur carrier)-SH + AH2 + 2 S-adenosyl-L-methionine = 2-methylsulfanyl-N(6)-dimethylallyladenosine(37) in tRNA + (sulfur carrier)-H + 5'-deoxyadenosine + L-methionine + A + S-adenosyl-L-homocysteine + 2 H(+). Its function is as follows. Catalyzes the methylthiolation of N6-(dimethylallyl)adenosine (i(6)A), leading to the formation of 2-methylthio-N6-(dimethylallyl)adenosine (ms(2)i(6)A) at position 37 in tRNAs that read codons beginning with uridine. This is tRNA-2-methylthio-N(6)-dimethylallyladenosine synthase from Geobacillus thermodenitrificans (strain NG80-2).